The sequence spans 161 residues: Nucleotide-binding protein Nmul_A1044 (161 aa).

The protein belongs to the YajQ family.

Functionally, nucleotide-binding protein. In Nitrosospira multiformis (strain ATCC 25196 / NCIMB 11849 / C 71), this protein is Nucleotide-binding protein Nmul_A1044.